The primary structure comprises 280 residues: Energy-coupling factor transporter ATP-binding protein EcfA (280 aa).

The 236-residue stretch at 5–240 (IDVKNLTYKY…DEMLKLTGLE (236 aa)) folds into the ABC transporter domain. 40 to 47 (GHNGSGKS) lines the ATP pocket.

It belongs to the ABC transporter superfamily. Energy-coupling factor EcfA family. In terms of assembly, forms a stable energy-coupling factor (ECF) transporter complex composed of 2 membrane-embedded substrate-binding proteins (S component), 2 ATP-binding proteins (A component) and 2 transmembrane proteins (T component).

The protein localises to the cell membrane. ATP-binding (A) component of a common energy-coupling factor (ECF) ABC-transporter complex. Unlike classic ABC transporters this ECF transporter provides the energy necessary to transport a number of different substrates. In Pediococcus pentosaceus (strain ATCC 25745 / CCUG 21536 / LMG 10740 / 183-1w), this protein is Energy-coupling factor transporter ATP-binding protein EcfA.